The sequence spans 239 residues: Putative ankyrin repeat protein RBE_0489 (239 aa).

ANK repeat units lie at residues 23 to 52, 80 to 109, and 113 to 143; these read ISSR…SPNA, GIDT…FINA, and FGFT…SLTL.

The protein is Putative ankyrin repeat protein RBE_0489 of Rickettsia bellii (strain RML369-C).